An 88-amino-acid polypeptide reads, in one-letter code: Small ribosomal subunit protein uS17 (88 aa).

Belongs to the universal ribosomal protein uS17 family. In terms of assembly, part of the 30S ribosomal subunit.

Functionally, one of the primary rRNA binding proteins, it binds specifically to the 5'-end of 16S ribosomal RNA. This Ligilactobacillus salivarius (strain UCC118) (Lactobacillus salivarius) protein is Small ribosomal subunit protein uS17.